Consider the following 142-residue polypeptide: 3-hydroxyacyl-[acyl-carrier-protein] dehydratase FabZ (142 aa).

Residue His48 is part of the active site.

The protein belongs to the thioester dehydratase family. FabZ subfamily.

It localises to the cytoplasm. The catalysed reaction is a (3R)-hydroxyacyl-[ACP] = a (2E)-enoyl-[ACP] + H2O. Its function is as follows. Involved in unsaturated fatty acids biosynthesis. Catalyzes the dehydration of short chain beta-hydroxyacyl-ACPs and long chain saturated and unsaturated beta-hydroxyacyl-ACPs. The protein is 3-hydroxyacyl-[acyl-carrier-protein] dehydratase FabZ of Clostridioides difficile (strain 630) (Peptoclostridium difficile).